The chain runs to 182 residues: Large ribosomal subunit protein uL6 (182 aa).

Belongs to the universal ribosomal protein uL6 family. Part of the 50S ribosomal subunit.

This protein binds to the 23S rRNA, and is important in its secondary structure. It is located near the subunit interface in the base of the L7/L12 stalk, and near the tRNA binding site of the peptidyltransferase center. This Methanocaldococcus jannaschii (strain ATCC 43067 / DSM 2661 / JAL-1 / JCM 10045 / NBRC 100440) (Methanococcus jannaschii) protein is Large ribosomal subunit protein uL6.